A 717-amino-acid chain; its full sequence is Ribosomal RNA large subunit methyltransferase K/L (717 aa).

The THUMP domain occupies 44-155 (DAYKVCIYSY…KQFVNVFLCL (112 aa)).

The protein belongs to the methyltransferase superfamily. RlmKL family.

It localises to the cytoplasm. It catalyses the reaction guanosine(2445) in 23S rRNA + S-adenosyl-L-methionine = N(2)-methylguanosine(2445) in 23S rRNA + S-adenosyl-L-homocysteine + H(+). The catalysed reaction is guanosine(2069) in 23S rRNA + S-adenosyl-L-methionine = N(2)-methylguanosine(2069) in 23S rRNA + S-adenosyl-L-homocysteine + H(+). Functionally, specifically methylates the guanine in position 2445 (m2G2445) and the guanine in position 2069 (m7G2069) of 23S rRNA. In Francisella tularensis subsp. holarctica (strain FTNF002-00 / FTA), this protein is Ribosomal RNA large subunit methyltransferase K/L.